Consider the following 209-residue polypeptide: Probable nicotinate-nucleotide adenylyltransferase (209 aa).

This sequence belongs to the NadD family.

The enzyme catalyses nicotinate beta-D-ribonucleotide + ATP + H(+) = deamido-NAD(+) + diphosphate. It functions in the pathway cofactor biosynthesis; NAD(+) biosynthesis; deamido-NAD(+) from nicotinate D-ribonucleotide: step 1/1. Its function is as follows. Catalyzes the reversible adenylation of nicotinate mononucleotide (NaMN) to nicotinic acid adenine dinucleotide (NaAD). The protein is Probable nicotinate-nucleotide adenylyltransferase of Shewanella woodyi (strain ATCC 51908 / MS32).